The sequence spans 640 residues: tRNA-dihydrouridine(47) synthase [NAD(P)(+)]-like (640 aa).

Low complexity predominate over residues 1 to 10 (MAEVAEVAAE). Disordered regions lie at residues 1-22 (MAEV…VGAC) and 47-106 (DKQE…PHMK). Residue Ala-2 is modified to N-acetylalanine. The span at 64–91 (PEAKRIRLEDGQENGKTEVAVESHERQV) shows a compositional bias: basic and acidic residues. Basic residues predominate over residues 92-106 (PKRARGQNKSRPHMK). C3H1-type zinc fingers lie at residues 110–140 (YDKE…HDVG) and 148–178 (ADLG…HLGP). Ser-267 is modified (phosphoserine). Residues 301–303 (PLT) and Gln-355 each bind FMN. Catalysis depends on Cys-386, which acts as the Proton donor. Residue Lys-406 forms a Glycyl lysine isopeptide (Lys-Gly) (interchain with G-Cter in SUMO2) linkage. FMN is bound by residues Lys-425, His-455, 487–489 (NGD), and 510–511 (AR).

It belongs to the Dus family. Dus3 subfamily. Requires FMN as cofactor.

The enzyme catalyses 5,6-dihydrouridine(47) in tRNA + NAD(+) = uridine(47) in tRNA + NADH + H(+). It catalyses the reaction 5,6-dihydrouridine(47) in tRNA + NADP(+) = uridine(47) in tRNA + NADPH + H(+). It carries out the reaction a 5,6-dihydrouridine in mRNA + NAD(+) = a uridine in mRNA + NADH + H(+). The catalysed reaction is a 5,6-dihydrouridine in mRNA + NADP(+) = a uridine in mRNA + NADPH + H(+). Catalyzes the synthesis of dihydrouridine, a modified base, in various RNAs, such as tRNAs, mRNAs and some long non-coding RNAs (lncRNAs). Mainly modifies the uridine in position 47 (U47) in the D-loop of most cytoplasmic tRNAs. Also able to mediate the formation of dihydrouridine in some mRNAs, thereby regulating their translation. This is tRNA-dihydrouridine(47) synthase [NAD(P)(+)]-like from Rattus norvegicus (Rat).